The following is a 314-amino-acid chain: Malate dehydrogenase (314 aa).

Residues 11–16 (GSGNIG) and D35 each bind NAD(+). Substrate is bound by residues R84 and R90. NAD(+)-binding positions include N97 and 120–122 (ITN). Substrate is bound by residues N122 and R153. Catalysis depends on H177, which acts as the Proton acceptor.

This sequence belongs to the LDH/MDH superfamily. MDH type 3 family.

The catalysed reaction is (S)-malate + NAD(+) = oxaloacetate + NADH + H(+). Its function is as follows. Catalyzes the reversible oxidation of malate to oxaloacetate. This chain is Malate dehydrogenase, found in Rickettsia bellii (strain RML369-C).